A 371-amino-acid polypeptide reads, in one-letter code: o-succinylbenzoate synthase (371 aa).

Lys164 functions as the Proton donor in the catalytic mechanism. Mg(2+)-binding residues include Asp189, Glu214, and Asp239. Lys263 serves as the catalytic Proton acceptor.

Belongs to the mandelate racemase/muconate lactonizing enzyme family. MenC type 2 subfamily. A divalent metal cation is required as a cofactor.

The catalysed reaction is (1R,6R)-6-hydroxy-2-succinyl-cyclohexa-2,4-diene-1-carboxylate = 2-succinylbenzoate + H2O. It participates in quinol/quinone metabolism; 1,4-dihydroxy-2-naphthoate biosynthesis; 1,4-dihydroxy-2-naphthoate from chorismate: step 4/7. The protein operates within quinol/quinone metabolism; menaquinone biosynthesis. Converts 2-succinyl-6-hydroxy-2,4-cyclohexadiene-1-carboxylate (SHCHC) to 2-succinylbenzoate (OSB). Does not show detectable N-acylamino acid racemase (NAAAR) activity with N-acetyl-S-methionine as substrate. The polypeptide is o-succinylbenzoate synthase (Bacillus subtilis (strain 168)).